Consider the following 211-residue polypeptide: MPLIGDKFPEMEVQTTHGLMKLPAEFKGRWFILFSHPADFTPVCTTEFVAFQEVYPELRELDCELVGLSVDQVFSHIKWIEWIEENLDTEIEFPVIADTGRVADTLGLIHPARPTNTVRAVFVVDPEGIIRAILYYPQELGRNIPEIVRMIRAFRVIDAEGVAAPANWPDNQLIGDHVIVPPASDIETARKRKEEYECYDWWLCHRSASGD.

In terms of domain architecture, Thioredoxin spans 2 to 156; it reads PLIGDKFPEM…IVRMIRAFRV (155 aa). The active-site Cysteine sulfenic acid (-SOH) intermediate is cysteine 44. Position 119 (arginine 119) interacts with substrate. A disulfide bond links cysteine 198 and cysteine 204.

Belongs to the peroxiredoxin family. Prx6 subfamily. Homodecamer. Pentamer of dimers that assemble into a ring structure.

It is found in the cytoplasm. It carries out the reaction a hydroperoxide + [thioredoxin]-dithiol = an alcohol + [thioredoxin]-disulfide + H2O. In terms of biological role, thiol-specific peroxidase that catalyzes the reduction of hydrogen peroxide and organic hydroperoxides to water and alcohols, respectively. Plays a role in cell protection against oxidative stress by detoxifying peroxides. The sequence is that of Peroxiredoxin from Methanothermobacter marburgensis (strain ATCC BAA-927 / DSM 2133 / JCM 14651 / NBRC 100331 / OCM 82 / Marburg) (Methanobacterium thermoautotrophicum).